The chain runs to 549 residues: Thermosome subunit alpha (549 aa).

The segment at 529 to 549 is disordered; the sequence is EGRQGAECPPNGCMGGMDMRM.

Belongs to the TCP-1 chaperonin family. As to quaternary structure, forms a Heterooligomeric complex of two stacked eight-membered rings.

Functionally, molecular chaperone; binds unfolded polypeptides in vitro, and has a weak ATPase activity. The chain is Thermosome subunit alpha (thsA) from Thermococcus sp. (strain KS-8).